We begin with the raw amino-acid sequence, 142 residues long: Large ribosomal subunit protein uL11 (142 aa).

This sequence belongs to the universal ribosomal protein uL11 family. As to quaternary structure, part of the ribosomal stalk of the 50S ribosomal subunit. Interacts with L10 and the large rRNA to form the base of the stalk. L10 forms an elongated spine to which L12 dimers bind in a sequential fashion forming a multimeric L10(L12)X complex. One or more lysine residues are methylated.

Functionally, forms part of the ribosomal stalk which helps the ribosome interact with GTP-bound translation factors. This is Large ribosomal subunit protein uL11 from Serratia proteamaculans (strain 568).